Here is a 195-residue protein sequence, read N- to C-terminus: Imidazoleglycerol-phosphate dehydratase (195 aa).

This sequence belongs to the imidazoleglycerol-phosphate dehydratase family.

The protein resides in the cytoplasm. It carries out the reaction D-erythro-1-(imidazol-4-yl)glycerol 3-phosphate = 3-(imidazol-4-yl)-2-oxopropyl phosphate + H2O. It participates in amino-acid biosynthesis; L-histidine biosynthesis; L-histidine from 5-phospho-alpha-D-ribose 1-diphosphate: step 6/9. This Cereibacter sphaeroides (strain ATCC 17023 / DSM 158 / JCM 6121 / CCUG 31486 / LMG 2827 / NBRC 12203 / NCIMB 8253 / ATH 2.4.1.) (Rhodobacter sphaeroides) protein is Imidazoleglycerol-phosphate dehydratase.